The primary structure comprises 870 residues: Leucine--tRNA ligase (870 aa).

A 'HIGH' region motif is present at residues 42 to 52; the sequence is PYPSGKLHMGH. The 'KMSKS' region signature appears at 629 to 633; it reads KMSKS. An ATP-binding site is contributed by Lys-632.

This sequence belongs to the class-I aminoacyl-tRNA synthetase family.

Its subcellular location is the cytoplasm. The catalysed reaction is tRNA(Leu) + L-leucine + ATP = L-leucyl-tRNA(Leu) + AMP + diphosphate. In Ectopseudomonas mendocina (strain ymp) (Pseudomonas mendocina), this protein is Leucine--tRNA ligase.